A 241-amino-acid chain; its full sequence is MASRLARTAVGAARLRPSVVPRVLPALSTVASPRYSSGVPSEDPKTKAQSIIDSLPGSNLMSKTAILSSAAGLSIYALSNEYYVVNEETVVAFCLLSVWGGLIKFGGPLYKKWADEQSDKIKNILNSARADHTQAVKTRIGDVKQMSGVIDITKTLFAVSKETAKLEAEAYELEQRTALAAEAKTVLDSWVRYESQVKQRQQKELAQTVIAKVQKELENPKVLKQILEQSVADVEKIVSKA.

A mitochondrion-targeting transit peptide spans 1–35 (MASRLARTAVGAARLRPSVVPRVLPALSTVASPRY).

The protein belongs to the eukaryotic ATPase B chain family. In terms of assembly, F-type ATPases have 2 components, CF(1) - the catalytic core - and CF(0) - the membrane proton channel. In yeast, the dimeric form of ATP synthase consists of 17 polypeptides: alpha, beta, gamma, delta, epsilon, 4 (B), 5 (OSCP), 6 (A), 8, 9 (C), d, E (Tim11), f, g, h, i/j and k.

It localises to the mitochondrion. It is found in the mitochondrion inner membrane. In terms of biological role, mitochondrial membrane ATP synthase (F(1)F(0) ATP synthase or Complex V) produces ATP from ADP in the presence of a proton gradient across the membrane which is generated by electron transport complexes of the respiratory chain. F-type ATPases consist of two structural domains, F(1) - containing the extramembraneous catalytic core, and F(0) - containing the membrane proton channel, linked together by a central stalk and a peripheral stalk. During catalysis, ATP synthesis in the catalytic domain of F(1) is coupled via a rotary mechanism of the central stalk subunits to proton translocation. Part of the complex F(0) domain and the peripheric stalk, which acts as a stator to hold the catalytic alpha(3)beta(3) subcomplex and subunit a/atp6 static relative to the rotary elements. This Neurospora crassa (strain ATCC 24698 / 74-OR23-1A / CBS 708.71 / DSM 1257 / FGSC 987) protein is ATP synthase subunit 4, mitochondrial (atp-3).